The following is a 202-amino-acid chain: Small ribosomal subunit protein uS3 (202 aa).

Positions 18–87 (LNEYLQRQLV…NPQIDVVEVP (70 aa)) constitute a KH type-2 domain.

Belongs to the universal ribosomal protein uS3 family. Part of the 30S ribosomal subunit.

In terms of biological role, binds the lower part of the 30S subunit head. In Thermofilum pendens (strain DSM 2475 / Hrk 5), this protein is Small ribosomal subunit protein uS3.